Here is a 271-residue protein sequence, read N- to C-terminus: Formamidopyrimidine-DNA glycosylase (271 aa).

The active-site Schiff-base intermediate with DNA is Pro2. The active-site Proton donor is the Glu3. Lys57 (proton donor; for beta-elimination activity) is an active-site residue. Positions 90, 109, and 151 each coordinate DNA. The segment at His236–Thr270 adopts an FPG-type zinc-finger fold. Arg260 (proton donor; for delta-elimination activity) is an active-site residue.

Belongs to the FPG family. Monomer. It depends on Zn(2+) as a cofactor.

The catalysed reaction is Hydrolysis of DNA containing ring-opened 7-methylguanine residues, releasing 2,6-diamino-4-hydroxy-5-(N-methyl)formamidopyrimidine.. It catalyses the reaction 2'-deoxyribonucleotide-(2'-deoxyribose 5'-phosphate)-2'-deoxyribonucleotide-DNA = a 3'-end 2'-deoxyribonucleotide-(2,3-dehydro-2,3-deoxyribose 5'-phosphate)-DNA + a 5'-end 5'-phospho-2'-deoxyribonucleoside-DNA + H(+). In terms of biological role, involved in base excision repair of DNA damaged by oxidation or by mutagenic agents. Acts as a DNA glycosylase that recognizes and removes damaged bases. Has a preference for oxidized purines, such as 7,8-dihydro-8-oxoguanine (8-oxoG). Has AP (apurinic/apyrimidinic) lyase activity and introduces nicks in the DNA strand. Cleaves the DNA backbone by beta-delta elimination to generate a single-strand break at the site of the removed base with both 3'- and 5'-phosphates. This Shewanella woodyi (strain ATCC 51908 / MS32) protein is Formamidopyrimidine-DNA glycosylase.